The sequence spans 1005 residues: Beta/gamma crystallin domain-containing protein 3 (1005 aa).

Phosphoserine occurs at positions 122, 129, 130, 136, and 140. Disordered regions lie at residues 132 to 159 (EDVL…PSSV) and 173 to 198 (NFDG…DWRT). Residues 180 to 189 (QEAEEEEEEA) are compositionally biased toward acidic residues. Beta/gamma crystallin 'Greek key' domains are found at residues 367–416 (GCWI…KRVL), 462–500 (GVWL…HPLQ), 512–556 (LKVI…RVIG), 557–599 (GVWV…RYLQ), 605–647 (SSIT…HVKS), 648–690 (GVWV…RPIQ), 701–737 (HLLK…KVLR), 738–781 (GCWL…QPID), and 828–869 (GLWI…RPMK). Residues 871 to 1003 (PAVYIRIRNR…GEETQKWDIE (133 aa)) form the Ricin B-type lectin domain.

The protein belongs to the beta/gamma-crystallin family.

The chain is Beta/gamma crystallin domain-containing protein 3 (Crybg3) from Mus musculus (Mouse).